A 373-amino-acid polypeptide reads, in one-letter code: MDKGIIFLAAGGTGGHLFPAEALAHELKASGYAVHLVTDSRAERYAGKFPAEEVHVVPSATIGSKNPIKLAQSVWKLWTGLRAARRLIARYKPRAVVGFGGYPTVPPLLAATGMGVPSLIHEQNAVMGRANKMLASRVQAIAGGFLPEGTGAFAAKTVTTGNPVRPAVSEAARVPYAAPHGGPFHLVVFGGSQGAQFFSKAVPQAICRLDDAQRQRLKVTQQARPEDREGVTAAYDKLGIPAEVSPFFTDMAARIASAHLVICRSGASTVSEVSVIGRPAILVPYPYALDHDQAANAAALAAKGGARVIAQAELNAERLAGILSDAMNTPDALAQMAANARETGKPDAARLLASLVEAIASGSTVAKFKEARS.

UDP-N-acetyl-alpha-D-glucosamine is bound by residues 13-15 (TGG), asparagine 124, arginine 165, serine 192, and glutamine 293.

The protein belongs to the glycosyltransferase 28 family. MurG subfamily.

It is found in the cell inner membrane. The catalysed reaction is di-trans,octa-cis-undecaprenyl diphospho-N-acetyl-alpha-D-muramoyl-L-alanyl-D-glutamyl-meso-2,6-diaminopimeloyl-D-alanyl-D-alanine + UDP-N-acetyl-alpha-D-glucosamine = di-trans,octa-cis-undecaprenyl diphospho-[N-acetyl-alpha-D-glucosaminyl-(1-&gt;4)]-N-acetyl-alpha-D-muramoyl-L-alanyl-D-glutamyl-meso-2,6-diaminopimeloyl-D-alanyl-D-alanine + UDP + H(+). The protein operates within cell wall biogenesis; peptidoglycan biosynthesis. Its function is as follows. Cell wall formation. Catalyzes the transfer of a GlcNAc subunit on undecaprenyl-pyrophosphoryl-MurNAc-pentapeptide (lipid intermediate I) to form undecaprenyl-pyrophosphoryl-MurNAc-(pentapeptide)GlcNAc (lipid intermediate II). This chain is UDP-N-acetylglucosamine--N-acetylmuramyl-(pentapeptide) pyrophosphoryl-undecaprenol N-acetylglucosamine transferase, found in Sinorhizobium fredii (strain NBRC 101917 / NGR234).